The primary structure comprises 211 residues: MDLSDIRREYIHGGLRRKDLQANPIDQFNLWLQQAIDANLSDPTAMTVATVDEHGQPFQRIVLLKNVDDVGFVFYTNLGSRKAQHIAHNNKISLHFPWHPLERQVHITGVAEKLTAMENMKYFMSRPKESQIAAIASHQSSRISARGVLEGKYLELKQKFANGEIPVPSFWGGYRIRPESLEFWQGGEHRLHDRFLYSRQDDNWTVDRLAP.

Substrate contacts are provided by residues 7-10 and K65; that span reads RREY. FMN contacts are provided by residues 60–65, 75–76, R81, K82, and Q104; these read RIVLLK and YT. Positions 122, 126, and 130 each coordinate substrate. Residues 139–140 and W184 each bind FMN; that span reads QS. Residue 190–192 participates in substrate binding; that stretch reads RLH. Residue R194 participates in FMN binding.

It belongs to the pyridoxamine 5'-phosphate oxidase family. Homodimer. FMN is required as a cofactor.

It carries out the reaction pyridoxamine 5'-phosphate + O2 + H2O = pyridoxal 5'-phosphate + H2O2 + NH4(+). The enzyme catalyses pyridoxine 5'-phosphate + O2 = pyridoxal 5'-phosphate + H2O2. It functions in the pathway cofactor metabolism; pyridoxal 5'-phosphate salvage; pyridoxal 5'-phosphate from pyridoxamine 5'-phosphate: step 1/1. It participates in cofactor metabolism; pyridoxal 5'-phosphate salvage; pyridoxal 5'-phosphate from pyridoxine 5'-phosphate: step 1/1. Its function is as follows. Catalyzes the oxidation of either pyridoxine 5'-phosphate (PNP) or pyridoxamine 5'-phosphate (PMP) into pyridoxal 5'-phosphate (PLP). In Vibrio cholerae serotype O1 (strain ATCC 39541 / Classical Ogawa 395 / O395), this protein is Pyridoxine/pyridoxamine 5'-phosphate oxidase.